Reading from the N-terminus, the 415-residue chain is Actin-like protein 7B (415 aa).

The tract at residues 1–31 is disordered; the sequence is MATRNSPMPLGTAQGDPGEAGTRPGPDASLR. The residue at position 6 (Ser6) is a Phosphoserine.

It belongs to the actin family. Detected only in the testis and, to a lesser extent, in the prostate.

It is found in the cytoplasm. The protein localises to the cytoskeleton. The protein is Actin-like protein 7B (ACTL7B) of Homo sapiens (Human).